The sequence spans 242 residues: tRNA pseudouridine synthase A (242 aa).

The active-site Nucleophile is Asp-51. Tyr-107 serves as a coordination point for substrate.

It belongs to the tRNA pseudouridine synthase TruA family. As to quaternary structure, homodimer.

The enzyme catalyses uridine(38/39/40) in tRNA = pseudouridine(38/39/40) in tRNA. Functionally, formation of pseudouridine at positions 38, 39 and 40 in the anticodon stem and loop of transfer RNAs. This Helicobacter pylori (strain HPAG1) protein is tRNA pseudouridine synthase A.